Consider the following 583-residue polypeptide: MMSRLNSVVIKLWLTIILIVTTVLILLSIALITFMQYYFTQETENAIREDARRISSLVEQSHNKEEAIKYSQTLIENPGGLMIINNKHRQSTASLSNIKKQMLNEVVNNDHFDDVFDKGKSVTRNVTIKEKGSSQTYILLGYPTKAQKNSHSKYSGVFIYKDLKSIEDTNNAITIITIITAVIFLTITTVFAFFLSSRITKPLRRLRDQATRVSEGDYSYKPSVTTKDEIGQLSQAFNQMSTEIEEHVDALSTSKNIRDSLINSMVEGVLGINESRQIILSNKMANDIMDNIDEDAKAFLLRQIEDTFKSKQTEMRDLEMNARFFVVTTSYIDKIEQGGKSGVVVTVRDMTNEHNLDQMKKDFIANVSHELRTPISLLQGYTESIVDGIVTEPDEIKESLAIVLDESKRLNRLVNELLNVARMDAEGLSVNKEVQPIAALLDKMKIKYRQQADDLGLNMTFNYCKKRVWSYDMDRMDQVLTNLIDNASRYTKPGDEIAITCDENESEDILYIKDTGTGIAPEHLQQVFDRFYKVDAARTRGKQGTGLGLFICKMIIEEHGGSIDVKSELGKGTTFIIKLPKPE.

Topologically, residues 1-11 are cytoplasmic; it reads MMSRLNSVVIK. The helical transmembrane segment at 12 to 32 threads the bilayer; the sequence is LWLTIILIVTTVLILLSIALI. Topologically, residues 33–174 are extracellular; that stretch reads TFMQYYFTQE…SIEDTNNAIT (142 aa). The chain crosses the membrane as a helical span at residues 175–195; sequence IITIITAVIFLTITTVFAFFL. Over 196–583 the chain is Cytoplasmic; it reads SSRITKPLRR…TFIIKLPKPE (388 aa). One can recognise an HAMP domain in the interval 197–249; sequence SRITKPLRRLRDQATRVSEGDYSYKPSVTTKDEIGQLSQAFNQMSTEIEEHVD. The Histidine kinase domain occupies 366–583; that stretch reads NVSHELRTPI…TFIIKLPKPE (218 aa). Position 369 is a phosphohistidine; by autocatalysis (His369).

Its subcellular location is the cell membrane. It carries out the reaction ATP + protein L-histidine = ADP + protein N-phospho-L-histidine.. Its function is as follows. Member of the two-component regulatory system SrrA/SrrB, which is involved in the global regulation of staphylococcal virulence factors in response to environmental oxygen levels as well as biofilm formation. Also plays an essential role in host-derived nitric oxide resistance by regulating hmp/flavohemoglobin, an enzyme that detoxifies nitric oxide by converting it to nitrate. Functions as a sensor protein kinase which is autophosphorylated at a histidine residue and transfers its phosphate group to SrrA. In turn, SrrA binds to the upstream promoter regions of the target genes to positively and negatively regulate their expression. This chain is Sensor protein SrrB (srrB), found in Staphylococcus aureus (strain MW2).